We begin with the raw amino-acid sequence, 97 residues long: Cell division protein FtsL (97 aa).

The Cytoplasmic portion of the chain corresponds to 1–11 (MSRLFVKRLPT). Residues 12-32 (GSFLMLLLYIGLLLSAIAVAY) traverse the membrane as a helical segment. Residues 33-97 (STYWNRQLLN…DPAEVRMVAP (65 aa)) lie on the Periplasmic side of the membrane.

This sequence belongs to the FtsL family. Part of a complex composed of FtsB, FtsL and FtsQ.

The protein resides in the cell inner membrane. In terms of biological role, essential cell division protein. May link together the upstream cell division proteins, which are predominantly cytoplasmic, with the downstream cell division proteins, which are predominantly periplasmic. The protein is Cell division protein FtsL of Pseudomonas aeruginosa (strain ATCC 15692 / DSM 22644 / CIP 104116 / JCM 14847 / LMG 12228 / 1C / PRS 101 / PAO1).